Consider the following 171-residue polypeptide: Protein GrpE (171 aa).

The disordered stretch occupies residues 1 to 22 (MNHEQPDIESQQSAADAAATAG).

It belongs to the GrpE family. Homodimer.

The protein resides in the cytoplasm. Its function is as follows. Participates actively in the response to hyperosmotic and heat shock by preventing the aggregation of stress-denatured proteins, in association with DnaK and GrpE. It is the nucleotide exchange factor for DnaK and may function as a thermosensor. Unfolded proteins bind initially to DnaJ; upon interaction with the DnaJ-bound protein, DnaK hydrolyzes its bound ATP, resulting in the formation of a stable complex. GrpE releases ADP from DnaK; ATP binding to DnaK triggers the release of the substrate protein, thus completing the reaction cycle. Several rounds of ATP-dependent interactions between DnaJ, DnaK and GrpE are required for fully efficient folding. The sequence is that of Protein GrpE from Stenotrophomonas maltophilia (strain K279a).